The sequence spans 804 residues: Leucine--tRNA ligase (804 aa).

The 'HIGH' region motif lies at 39–50 (PYPSGKGLHVGH). The short motif at 573–577 (KMSKS) is the 'KMSKS' region element. Lysine 576 is an ATP binding site.

Belongs to the class-I aminoacyl-tRNA synthetase family.

The protein localises to the cytoplasm. It carries out the reaction tRNA(Leu) + L-leucine + ATP = L-leucyl-tRNA(Leu) + AMP + diphosphate. The polypeptide is Leucine--tRNA ligase (Lactobacillus delbrueckii subsp. bulgaricus (strain ATCC BAA-365 / Lb-18)).